The primary structure comprises 389 residues: Urea transporter 1 (389 aa).

5 consecutive transmembrane segments (helical) span residues 53–73 (PVVL…VFVN), 91–110 (WWAL…ALLL), 116–136 (LIAS…MAVF), 143–163 (FWWL…FSSA), and 173–193 (LPVF…ATGH). Residue asparagine 211 is glycosylated (N-linked (GlcNAc...) asparagine). The next 4 helical transmembrane spans lie at 242–262 (GGIF…HAAI), 281–301 (IYFG…GGMF), 310–330 (LLAL…ANFM), and 333–353 (VGLP…LIMT).

It belongs to the urea transporter family. As to quaternary structure, homotrimer; each subunit contains a pore through which urea permeates. Identified in a complex with STOM. In terms of tissue distribution, detected in erythrocytes (at protein level). Expressed in spleen erythroblasts and tumoral kidney.

Its subcellular location is the cell membrane. It is found in the basolateral cell membrane. The enzyme catalyses urea(in) = urea(out). With respect to regulation, inhibited by phloretin and para-chloromercuribenzene sulfonate. Functionally, mediates the transport of urea driven by a concentration gradient across the cell membrane of erythrocytes. Also mediates the transport of urea across the cell membrane of the renal inner medullary collecting duct which is critical to the urinary concentrating mechanism. Facilitates water transport in erythrocytes. This is Urea transporter 1 (SLC14A1) from Homo sapiens (Human).